Reading from the N-terminus, the 173-residue chain is Co-chaperone protein HscB homolog (173 aa).

Residues 5–77 (CHYALFDLQP…PRRARYLLAI (73 aa)) enclose the J domain.

It belongs to the HscB family. Interacts with HscA and stimulates its ATPase activity.

Co-chaperone involved in the maturation of iron-sulfur cluster-containing proteins. Seems to help targeting proteins to be folded toward HscA. This Pseudomonas putida (strain ATCC 700007 / DSM 6899 / JCM 31910 / BCRC 17059 / LMG 24140 / F1) protein is Co-chaperone protein HscB homolog.